The following is a 461-amino-acid chain: ATP synthase subunit beta (461 aa).

151 to 158 (GGAGVGKT) is a binding site for ATP.

The protein belongs to the ATPase alpha/beta chains family. In terms of assembly, F-type ATPases have 2 components, CF(1) - the catalytic core - and CF(0) - the membrane proton channel. CF(1) has five subunits: alpha(3), beta(3), gamma(1), delta(1), epsilon(1). CF(0) has three main subunits: a(1), b(2) and c(9-12). The alpha and beta chains form an alternating ring which encloses part of the gamma chain. CF(1) is attached to CF(0) by a central stalk formed by the gamma and epsilon chains, while a peripheral stalk is formed by the delta and b chains.

It is found in the cell inner membrane. It carries out the reaction ATP + H2O + 4 H(+)(in) = ADP + phosphate + 5 H(+)(out). Its function is as follows. Produces ATP from ADP in the presence of a proton gradient across the membrane. The catalytic sites are hosted primarily by the beta subunits. This is ATP synthase subunit beta from Coxiella burnetii (strain Dugway 5J108-111).